We begin with the raw amino-acid sequence, 106 residues long: Biogenesis of lysosome-related organelles complex 1 subunit 6 (106 aa).

Residues 78 to 106 (KKTSQLELSDTNIEDGSTTSTPTTTNKSQ) form a disordered region. The segment covering 82 to 93 (QLELSDTNIEDG) has biased composition (polar residues). Low complexity predominate over residues 94 to 106 (STTSTPTTTNKSQ).

The protein belongs to the BLOC1S6 family. In terms of assembly, homodimer (isoform 1). Component of the biogenesis of lysosome-related organelles complex-1 (BLOC-1) composed at least of blos-1, blos-2, blos-4, dsbn-1, glo-2, mutd-1 and snpn-1. Isoform 1 interacts with blos-1 and blos-4.

The protein localises to the cytoplasm. Its subcellular location is the endosome. In terms of biological role, component of the biogenesis of lysosome-related organelles complex-1 (BLOC-1) involved in gut granule biogenesis. This Caenorhabditis elegans protein is Biogenesis of lysosome-related organelles complex 1 subunit 6 (glo-2).